A 368-amino-acid polypeptide reads, in one-letter code: UDP-N-acetylglucosamine--N-acetylmuramyl-(pentapeptide) pyrophosphoryl-undecaprenol N-acetylglucosamine transferase (368 aa).

UDP-N-acetyl-alpha-D-glucosamine is bound by residues 13–15 (TGG), Asn-124, Arg-167, Ser-195, and Gln-296.

Belongs to the glycosyltransferase 28 family. MurG subfamily.

It localises to the cell inner membrane. It catalyses the reaction di-trans,octa-cis-undecaprenyl diphospho-N-acetyl-alpha-D-muramoyl-L-alanyl-D-glutamyl-meso-2,6-diaminopimeloyl-D-alanyl-D-alanine + UDP-N-acetyl-alpha-D-glucosamine = di-trans,octa-cis-undecaprenyl diphospho-[N-acetyl-alpha-D-glucosaminyl-(1-&gt;4)]-N-acetyl-alpha-D-muramoyl-L-alanyl-D-glutamyl-meso-2,6-diaminopimeloyl-D-alanyl-D-alanine + UDP + H(+). Its pathway is cell wall biogenesis; peptidoglycan biosynthesis. Cell wall formation. Catalyzes the transfer of a GlcNAc subunit on undecaprenyl-pyrophosphoryl-MurNAc-pentapeptide (lipid intermediate I) to form undecaprenyl-pyrophosphoryl-MurNAc-(pentapeptide)GlcNAc (lipid intermediate II). The sequence is that of UDP-N-acetylglucosamine--N-acetylmuramyl-(pentapeptide) pyrophosphoryl-undecaprenol N-acetylglucosamine transferase from Maricaulis maris (strain MCS10) (Caulobacter maris).